Consider the following 91-residue polypeptide: Cell division topological specificity factor (91 aa).

It belongs to the MinE family.

In terms of biological role, prevents the cell division inhibition by proteins MinC and MinD at internal division sites while permitting inhibition at polar sites. This ensures cell division at the proper site by restricting the formation of a division septum at the midpoint of the long axis of the cell. This is Cell division topological specificity factor from Lachnospira eligens (strain ATCC 27750 / DSM 3376 / VPI C15-48 / C15-B4) (Eubacterium eligens).